The following is a 243-amino-acid chain: Peptidyl-tRNA hydrolase (243 aa).

Tyr14 serves as a coordination point for tRNA. His19 (proton acceptor) is an active-site residue. Residues Phe64, Asn66, and Asn112 each coordinate tRNA. The segment at 184-225 is disordered; it reads AAQTRPAEKAKPLATAKPKEGEARTSGGSVAEVGAPPPSPTG. A compositionally biased stretch (basic and acidic residues) spans 189 to 206; that stretch reads PAEKAKPLATAKPKEGEA.

Belongs to the PTH family. Monomer.

It localises to the cytoplasm. It carries out the reaction an N-acyl-L-alpha-aminoacyl-tRNA + H2O = an N-acyl-L-amino acid + a tRNA + H(+). In terms of biological role, hydrolyzes ribosome-free peptidyl-tRNAs (with 1 or more amino acids incorporated), which drop off the ribosome during protein synthesis, or as a result of ribosome stalling. Catalyzes the release of premature peptidyl moieties from peptidyl-tRNA molecules trapped in stalled 50S ribosomal subunits, and thus maintains levels of free tRNAs and 50S ribosomes. This is Peptidyl-tRNA hydrolase from Rhodospirillum rubrum (strain ATCC 11170 / ATH 1.1.1 / DSM 467 / LMG 4362 / NCIMB 8255 / S1).